A 363-amino-acid chain; its full sequence is DNA replication and repair protein RecF (363 aa).

Residue 30 to 37 (GPNGSGKT) participates in ATP binding.

It belongs to the RecF family.

The protein resides in the cytoplasm. Functionally, the RecF protein is involved in DNA metabolism; it is required for DNA replication and normal SOS inducibility. RecF binds preferentially to single-stranded, linear DNA. It also seems to bind ATP. The chain is DNA replication and repair protein RecF from Vibrio cholerae serotype O1 (strain ATCC 39541 / Classical Ogawa 395 / O395).